The sequence spans 235 residues: Matrix protein (235 aa).

Belongs to the nucleorhabdovirus type-2 matrix protein family. Homomultimer. Interacts with nucleoprotein and with the cytoplasmic domain of glycoprotein.

The protein localises to the virion membrane. It localises to the host endomembrane system. In terms of biological role, plays a major role in assembly and budding of virion. Completely covers the ribonucleoprotein coil and keep it in condensed bullet-shaped form. Inhibits viral transcription and stimulates replication. The protein is Matrix protein (M) of Rottboellia (Sorghum).